We begin with the raw amino-acid sequence, 65 residues long: Toxin Cbo5 (65 aa).

In terms of domain architecture, LCN-type CS-alpha/beta spans 2-65 (KDGYLVDKTG…QTWPLPNKSC (64 aa)). 4 cysteine pairs are disulfide-bonded: Cys12–Cys65, Cys16–Cys41, Cys25–Cys46, and Cys29–Cys48.

Belongs to the long (4 C-C) scorpion toxin superfamily. Sodium channel inhibitor family. Beta subfamily. In terms of tissue distribution, expressed by the venom gland.

It is found in the secreted. A probable toxin that has no activity on the tested sodium channels (when tested at 200 nM) and is not toxic to mice, crickets or sweet water shrimps. It resembles Beta toxins that bind voltage-independently at site-4 of sodium channels and shift the voltage of activation toward more negative potentials, thereby affecting sodium channel activation and promoting spontaneous and repetitive firing. This chain is Toxin Cbo5, found in Centruroides bonito (Scorpion).